Reading from the N-terminus, the 106-residue chain is Biogenesis of lysosome-related organelles complex 1 subunit 4 (106 aa).

Residues T53–Q106 are a coiled coil.

This sequence belongs to the BLOC1S4 family. In terms of assembly, component of the biogenesis of lysosome-related organelles complex-1 (BLOC-1) composed at least of blos-1, blos-2, blos-4, dsbn-1, glo-2, mutd-1 and snpn-1. Interacts with glo-2.

Its function is as follows. Component of the biogenesis of lysosome-related organelles complex-1 (BLOC-1) involved in gut granule biogenesis. This is Biogenesis of lysosome-related organelles complex 1 subunit 4 (blos-4) from Caenorhabditis elegans.